The primary structure comprises 3323 residues: MQLLGLLGLLWMLKASPWATGTLSTATSISQVPFPRAEAASAVLSNSPHSRDLAGWPLGVPQLASPAPGHRENAPMTLTTSPHDTLISETLLNSPVSSNTSTTPTSKFAFKVETTPPTVLVYSATTECVYPTSFIITISHPTSICVTTTQVAFTSSYTSTPVTQKPVTTVTSTYSMTTTEKGTSAMTSSPSTTTARETPIVTVTPSSVSATDTTFHTTISSTTRTTERTPLPTGSIHTTTSPTPVFTTLKTAVTSTSPITSSITSTNTVTSMTTTASQPTATNTLSSPTRTILSSTPVLSTETITSGITNTTPLSTLVTTLPTTISRSTPTSETTYTTSPTSTVTDSTTKIAYSTSMTGTLSTETSLPPTSSSLPTTETATTPMTNLVTTTTEISSHSTPSFSSSTIYSTVSTSTTAISSLPPTSGTMVTSTTMTPSSLSTDIPFTTPTTITHHSVGSTGFLTTATDLTSTFTVSSSSAMSTSVIPSSPSIQNTETSSLVSMTSATTPNVRPTFVSTLSTPTSSLLTTFPATYSFSSSMSASSAGTTHTESISSPPASTSTLHTTAESTLAPTTTTSFTTSTTMEPPSTTAATTGTGQTTFTSSTATFPETTTPTPTTDMSTESLTTAMTSPPITSSVTSTNTVTSMTTTTSPPTTTNSFTSLTSMPLSSTPVPSTEVVTSGTINTIPPSILVTTLPTPNASSMTTSETTYPNSPTGPGTNSTTEITYPTTMTETSSTATSLPPTSPLVSTAKTAKTPTTNLVTTTTKTTSHSTTSFTSSTVYSTASTYTTAITSVPTTLGTMVTSTSMISSTVSTGIPTSQPTTITPSSVGISGSLPMMTDLTSVYTVSNMSARPTTVIPSSPTVQNTEISISVSMTSATTPSGGPTFTSTENTPTRSLLTSFPMTHSFSSSMSESSAGTTHTESISSPRGTTSTLHTTVESTPSPTTTTSFTTSTMMEPPSSTVSTTGRGQTTFPSSTATFPETTTLTPTTDISTVSLTTAMTSPPPVSSSITPTNTMTSMRTTTYWPTATNTLSPLTSSILSSTPVPSTEMITSHTTNTTPLSTLVTTLLTTITRSTPTSETTYPTSPTSIVSDSTTEITYSTSITGTLSTATTLPPTSSSLPTTETATMTPTTTLITTTPNTTSLSTPSFTSSTIYSTVSTSTTAISSASPTSGTMVTSTTMTPSSLSTDTPSTTPTTITYPSVGSTGFLTTATDLTSTFTVSSSSAMSTSVIPSSPSIQNTETSSLVSMTSATTPSLRPTITSTDSTLTSSLLTTFPSTYSFSSSMSASSAGTTHTETISSLPASTNTIHTTAESALAPTTTTSFTTSPTMEPPSTTVATTGTGQTTFPSSTATFLETTTLTPTTDFSTESLTTAMTSTPPITSSITPTDTMTSMRTTTSWPTATNTLSPLTSSILSSTPVPSTEVTTSHTTNTNPVSTLVTTLPITITRSTLTSETAYPSSPTSTVTESTTEITYPTTMTETSSTATSLPPTSSLVSTAETAKTPTTNLVTTTTKTTSHSTTSFTSSTIYSTASTPTTAITSVPTTLGTMVTSTSMIPSTVSTGIPTSQPTTITPSSVGISGSLPMMTDLTSVYTVSSMSARPTSVIPSSPTVQNTETSIFVSMMSATTPSGGPTFTSTENTPTRSLLTSFPVTHSFSSSMSASSVGTTHTQSISSPPAITSTLHTTAESTPSPTTTMSFTTFTKMETPSSTVATTGTGQTTFTSSTATSPKTTTLTPTSDISTGSFKTAVSSTPPITSSITSTYTVTSMTTTTPLGPTATNTLPSFTSSVSSSTPVPSTEAITSGTTNTTPLSTLVTTFSNSDTSSTPTSETTYPTSLTSALTDSTTRTTYSTNMTGTLSTVTSLRPTSSSLLTTVTATVPTTNLVTTTTKITSHSTPSFTSSIATTETPSHSTPRFTSSITTTETPSHSTPRFTSSITNTKTTSHSSPSFTSSITTTETTSHNTPSLTSSITTTKTTSHSTPSYTSLITTTTTTSHSTPSFTSSITTTETTSHNTPSLTSSITTTETTSHSTPSFTSSITTETTSHSTPSFTSLITITEITSHSTLSYTTSITTTETPSHSTLSFTSSITTTETTSHSTPSFTSSITTSEMPSHSTPSFTSSITTTENATHSTPNFTSSITTTETTSHSTPSFTSLITTTETTSHRWGTTETTSYSTPSFTSSNTITETTSHSTPSYITSITTTETPSSSTPSFSSSITTTETTSHSTPGFTSSITTTETTSHSTPSFTSSITTTETTSHDTPSFTSSITTSETPSHSTPSSTSLITTTKTTSHSTPSFTSSITTTETTSHSAHSFTSSITTTETTSHNTRSFTSSITTTETNSHSTTSFTSSITTTETTSHSTPSFSSSITTTETPLHSTPGLTSWVTTTKTTSHITPGLTSSITTTETTSHSTPGFTSSITTTETTSESTPSLSSSTIYSTVSTSTTAITSHFTTSETAVTPTPVTPSSLSTDIPTTSLRTLTPSSVGTSTSLTTTTDFPSIPTDISTLPTRTHIISSSPSIQSTETSSLVGTTSPTMSTVRMTLRITENTPISSFSTSIVVIPETPTQTPPVLTSATGTQTSPAPTTVTFGSTDSSTSTLHTLTPSTALSTIVSTSQVPIPSTHSSTLQTTPSTPSLQTSLTSTSEFTTESFTRGSTSTNAILTSFSTIIWSSTPTIIMSSSPSSASITPVFSTTIHSVPSSPYIFSTENVGSASITGFPSLSSSATTSTSSTSSSLTTALTEITPFSYISLPSTTPCPGTITITIVPASPTDPCVEMDPSTEATSPPTTPLTVFPFTTEMVTCPTSISIQTTLTTYMDTSSMMPESESSISPNASSSTGTGTVPTNTVFTSTRLPTSETWLSNSSVIPLPLPGVSTIPLTMKPSSSLPTILRTSSKSTHPSPPTTRTSETPVATTQTPTTLTSRRTTRITSQMTTQSTLTTTAGTCDNGGTWEQGQCACLPGFSGDRCQLQTRCQNGGQWDGLKCQCPSTFYGSSCEFAVEQVDLDVVETEVGMEVSVDQQFSPDLNDNTSQAYRDFNKTFWNQMQKIFADMQGFTFKGVEILSLRNGSIVVDYLVLLEMPFSPQLESEYEQVKTTLKEGLQNASQDVNSCQDSQTLCFKPDSIKVNNNSKTELTPAAICRRAAPTGYEEFYFPLVEATRLRCVTKCTSGVDNAIDCHQGQCVLETSGPTCRCYSTDTHWFSGPRCEVAVHWRALVGGLTAGAALLVLLLLALGVRAVRSGWWGGQRRGRSWDQDRKWFETWDEEVVGTFSNWGFEDDGTDKDTNFYVALENVDTTMKVHIKRPEMTSSSV.

The N-terminal stretch at methionine 1–alanine 15 is a signal peptide. Disordered regions lie at residues threonine 218–threonine 243, threonine 270–threonine 289, isoleucine 325–threonine 345, glycine 359–alanine 380, methionine 539–glutamate 677, asparagine 700–serine 722, glutamate 734–lysine 756, serine 909–proline 991, isoleucine 1170–threonine 1201, alanine 1318–serine 1356, alanine 1380–valine 1442, threonine 1484–lysine 1509, threonine 1714–serine 1746, phenylalanine 1793–serine 1844, and threonine 1900–threonine 2056. The span at threonine 270 to threonine 284 shows a compositional bias: low complexity. Polar residues predominate over residues glycine 545–histidine 563. Residues threonine 564–threonine 618 show a composition bias toward low complexity. A compositionally biased stretch (polar residues) spans aspartate 619–methionine 629. The span at threonine 630–threonine 676 shows a compositional bias: low complexity. Over residues asparagine 700–asparagine 721 the composition is skewed to polar residues. A compositionally biased stretch (low complexity) spans serine 909–serine 918. Over residues alanine 919–glycine 932 the composition is skewed to polar residues. Over residues threonine 933–proline 991 the composition is skewed to low complexity. A compositionally biased stretch (low complexity) spans proline 1324–serine 1356. 32 repeat units span residues valine 1893–serine 1910, isoleucine 1911–serine 1927, isoleucine 1928–serine 1944, isoleucine 1945–serine 1961, isoleucine 1962–serine 1978, isoleucine 1979–leucine 1995, isoleucine 1996–serine 2012, isoleucine 2013–serine 2029, isoleucine 2030–serine 2046, isoleucine 2047–leucine 2062, isoleucine 2063–serine 2079, isoleucine 2080–serine 2096, isoleucine 2097–serine 2113, isoleucine 2114–serine 2130, isoleucine 2131–serine 2147, isoleucine 2148–leucine 2164, isoleucine 2165–serine 2191, asparagine 2192–serine 2208, isoleucine 2209–serine 2225, isoleucine 2226–serine 2242, isoleucine 2243–serine 2259, isoleucine 2260–serine 2276, isoleucine 2277–leucine 2293, isoleucine 2294–serine 2310, isoleucine 2311–serine 2327, isoleucine 2328–serine 2344, isoleucine 2345–serine 2361, isoleucine 2362–serine 2378, isoleucine 2379–tryptophan 2395, valine 2396–serine 2412, isoleucine 2413–serine 2429, and isoleucine 2430–serine 2446. Residues valine 1893 to serine 2446 form a 32 X approximate tandem repeats, Ser/Thr-rich region. Positions phenylalanine 1907–asparagine 1947 are enriched in polar residues. Over residues threonine 1948–threonine 2056 the composition is skewed to low complexity. Composition is skewed to low complexity over residues threonine 2100–threonine 2170, threonine 2177–threonine 2384, threonine 2393–threonine 2447, and threonine 2464–threonine 2507. 6 disordered regions span residues threonine 2100–threonine 2447, threonine 2464–aspartate 2508, threonine 2578–threonine 2608, isoleucine 2631–serine 2656, methionine 2834–asparagine 2858, and serine 2897–arginine 2937. The span at threonine 2578–glycine 2602 shows a compositional bias: polar residues. Low complexity-rich tracts occupy residues serine 2633–serine 2656, methionine 2834–serine 2849, and threonine 2905–arginine 2937. Residues serine 2976 to glutamate 3009 form the EGF-like domain. 2 cysteine pairs are disulfide-bonded: cysteine 2980–cysteine 2986 and cysteine 2999–cysteine 3008. One can recognise an SEA domain in the interval aspartate 3018 to lysine 3143. A helical transmembrane segment spans residues leucine 3227 to valine 3247.

Post-translationally, highly O-glycosylated and probably also N-glycosylated. As to expression, broad specificity; small intestine, colon, colonic tumors, heart, liver, thymus, prostate, pancreas and gall bladder.

Its subcellular location is the membrane. The protein localises to the secreted. Its function is as follows. Major glycoprotein component of a variety of mucus gels. Thought to provide a protective, lubricating barrier against particles and infectious agents at mucosal surfaces. May be involved in ligand binding and intracellular signaling. This is Mucin-3A from Homo sapiens (Human).